The sequence spans 561 residues: MTPALAAGLQVVFVLAVLAVAYVPVGDYMARVYESRRHLRVESVLYRLCRIDPHAEQTWYGYAGSVLGFSAASVLFLYALQRIQGVLPLSGDLSGVSPAVAFNTAVSFVTNTNWQSYAPETTMSNLTQPVGLAVQNFVSAAVGMAVAVALIRGFVRVSRGGEIGNFWVDLTRGSLRILLPFSFVIALILLSQGVIQSFHPGFASTGLDGNSVTNALAPVASQEAIKELGTNGGGILAANSAHPFENPTPVSNIVEILAILLIPVSLTRTFGTMVGERKQGLTLLAVMGILWGSLLAVTLAAESGRRGVAATAAGAMMEGKEVRFGIPGTALFAVSTTGTSTGAVNSAHDSLSPLGGGAVLLNMLLGEIAPGGVGTGLYGILVLALIAVFVGGLLVGRTPEYLGKKLRQREITLAALSVLVMPALVLIGTGITVILSSTTGYQGNSGDPGSPGSIHGFSEVLYAFASASNNNGSAFGGLTVTSDWFQTALGLCMLFGRFLPIIFVLALAGSLASQKKTAAGTGTLPTAGPMFTGLLTGTVVLVAALTFFPALALGPIAEALQ.

The next 12 membrane-spanning stretches (helical) occupy residues 5 to 25, 60 to 80, 86 to 106, 131 to 151, 177 to 197, 247 to 267, 281 to 301, 324 to 344, 376 to 396, 415 to 435, 488 to 508, and 537 to 557; these read LAAG…YVPV, YGYA…LYAL, VLPL…NTAV, GLAV…VALI, ILLP…VIQS, PTPV…VSLT, LTLL…TLAA, FGIP…TGAV, GLYG…LLVG, ALSV…TVIL, ALGL…LALA, and GTVV…GPIA.

The protein belongs to the KdpA family. In terms of assembly, the system is composed of three essential subunits: KdpA, KdpB and KdpC.

It localises to the cell membrane. Its function is as follows. Part of the high-affinity ATP-driven potassium transport (or Kdp) system, which catalyzes the hydrolysis of ATP coupled with the electrogenic transport of potassium into the cytoplasm. This subunit binds the extracellular potassium ions and delivers the ions to the membrane domain of KdpB through an intramembrane tunnel. In Rhodococcus opacus (strain B4), this protein is Potassium-transporting ATPase potassium-binding subunit.